We begin with the raw amino-acid sequence, 192 residues long: uncharacterized protein (192 aa).

Positions 29–160 (QRQAAVLVPI…PLDIHRRGND (132 aa)) constitute a Nudix hydrolase domain. A Nudix box motif is present at residues 67–89 (GAVDNTDATLIAAALREAQEEVA). Residues Glu-83 and Glu-87 each coordinate Mg(2+).

Belongs to the Nudix hydrolase family. PCD1 subfamily. Mn(2+) serves as cofactor. Mg(2+) is required as a cofactor.

Its function is as follows. Probably mediates the hydrolysis of some nucleoside diphosphate derivatives. This is an uncharacterized protein from Klebsiella pneumoniae subsp. pneumoniae (strain ATCC 700721 / MGH 78578).